Here is a 150-residue protein sequence, read N- to C-terminus: MSSRFLRTAVARATQQRSMYENPYINRFKARSKVSEDFHKKTTGITGLFVNEHPHRALTVVYGRILRALEQIPRDAAYRKYTEAVVKQRLALVQAENDIKKLEEKIGMGQIEEVIEQAEYELETTRAIVDSKAWEPLVESAPKGQWSWPV.

This sequence belongs to the complex I NDUFA5 subunit family. In terms of assembly, complex I is composed of 45 different subunits.

The protein localises to the mitochondrion inner membrane. Accessory subunit of the mitochondrial membrane respiratory chain NADH dehydrogenase (Complex I), that is believed not to be involved in catalysis. Complex I functions in the transfer of electrons from NADH to the respiratory chain. The immediate electron acceptor for the enzyme is believed to be ubiquinone. The chain is Probable NADH dehydrogenase [ubiquinone] 1 alpha subcomplex subunit 5 from Caenorhabditis elegans.